Reading from the N-terminus, the 199-residue chain is MAKNKYSEPDYWSKKAFAENYPARSVYKLEEMNKKFNLFSPNDKVLDLGAAPGSWTVYVLRFLNKEGRVTAVDLKPLDSSVYDERLNFFQGDMFDKGIIKSVKELGPYDAVICDAAPATTGNKTVDTARSSGLVELALYYAQEQLKQGGSFVVKIFQGGDQQIHLNNLRKCFKTARAFKPEACRSSSFETYLIGLDFKG.

G53, W55, D73, D92, and D114 together coordinate S-adenosyl-L-methionine. Catalysis depends on K154, which acts as the Proton acceptor.

Belongs to the class I-like SAM-binding methyltransferase superfamily. RNA methyltransferase RlmE family.

The protein localises to the cytoplasm. The enzyme catalyses uridine(2552) in 23S rRNA + S-adenosyl-L-methionine = 2'-O-methyluridine(2552) in 23S rRNA + S-adenosyl-L-homocysteine + H(+). In terms of biological role, specifically methylates the uridine in position 2552 of 23S rRNA at the 2'-O position of the ribose in the fully assembled 50S ribosomal subunit. This is Ribosomal RNA large subunit methyltransferase E from Treponema denticola (strain ATCC 35405 / DSM 14222 / CIP 103919 / JCM 8153 / KCTC 15104).